A 125-amino-acid polypeptide reads, in one-letter code: Holo-[acyl-carrier-protein] synthase (125 aa).

Residues aspartate 8 and glutamate 57 each coordinate Mg(2+).

This sequence belongs to the P-Pant transferase superfamily. AcpS family. Mg(2+) is required as a cofactor.

Its subcellular location is the cytoplasm. The enzyme catalyses apo-[ACP] + CoA = holo-[ACP] + adenosine 3',5'-bisphosphate + H(+). In terms of biological role, transfers the 4'-phosphopantetheine moiety from coenzyme A to a Ser of acyl-carrier-protein. The sequence is that of Holo-[acyl-carrier-protein] synthase from Natranaerobius thermophilus (strain ATCC BAA-1301 / DSM 18059 / JW/NM-WN-LF).